The chain runs to 120 residues: Large ribosomal subunit protein uL18 (120 aa).

It belongs to the universal ribosomal protein uL18 family. Part of the 50S ribosomal subunit; part of the 5S rRNA/L5/L18/L25 subcomplex. Contacts the 5S and 23S rRNAs.

Its function is as follows. This is one of the proteins that bind and probably mediate the attachment of the 5S RNA into the large ribosomal subunit, where it forms part of the central protuberance. The protein is Large ribosomal subunit protein uL18 of Sinorhizobium medicae (strain WSM419) (Ensifer medicae).